Reading from the N-terminus, the 152-residue chain is Deoxyuridine 5'-triphosphate nucleotidohydrolase (152 aa).

Substrate contacts are provided by residues 71–73 (RSG), asparagine 84, 88–90 (LID), and methionine 98.

The protein belongs to the dUTPase family. Requires Mg(2+) as cofactor.

It catalyses the reaction dUTP + H2O = dUMP + diphosphate + H(+). The protein operates within pyrimidine metabolism; dUMP biosynthesis; dUMP from dCTP (dUTP route): step 2/2. This enzyme is involved in nucleotide metabolism: it produces dUMP, the immediate precursor of thymidine nucleotides and it decreases the intracellular concentration of dUTP so that uracil cannot be incorporated into DNA. This Shewanella piezotolerans (strain WP3 / JCM 13877) protein is Deoxyuridine 5'-triphosphate nucleotidohydrolase.